A 77-amino-acid chain; its full sequence is UPF0291 protein BLi02035/BL02933 (77 aa).

Positions 57 to 77 are disordered; it reads PEGNDVTPEKLKQEKRNRRLH.

It belongs to the UPF0291 family.

Its subcellular location is the cytoplasm. In Bacillus licheniformis (strain ATCC 14580 / DSM 13 / JCM 2505 / CCUG 7422 / NBRC 12200 / NCIMB 9375 / NCTC 10341 / NRRL NRS-1264 / Gibson 46), this protein is UPF0291 protein BLi02035/BL02933.